The following is a 67-amino-acid chain: Beta-defensin 36 (67 aa).

A signal peptide spans M1 to A22. 3 cysteine pairs are disulfide-bonded: C25-C52, C32-C46, and C36-C53.

Belongs to the beta-defensin family.

It localises to the secreted. Functionally, has antibacterial activity. The chain is Beta-defensin 36 (Defb36) from Mus musculus (Mouse).